Reading from the N-terminus, the 330-residue chain is Aspartate--ammonia ligase (330 aa).

Belongs to the class-II aminoacyl-tRNA synthetase family. AsnA subfamily.

Its subcellular location is the cytoplasm. The enzyme catalyses L-aspartate + NH4(+) + ATP = L-asparagine + AMP + diphosphate + H(+). The protein operates within amino-acid biosynthesis; L-asparagine biosynthesis; L-asparagine from L-aspartate (ammonia route): step 1/1. The protein is Aspartate--ammonia ligase of Streptococcus pyogenes serotype M49 (strain NZ131).